A 98-amino-acid chain; its full sequence is Integration host factor subunit alpha (98 aa).

The tract at residues 49–71 (FGNFDLRDKNQRPGRNPKTGEDI) is disordered.

This sequence belongs to the bacterial histone-like protein family. Heterodimer of an alpha and a beta chain.

This protein is one of the two subunits of integration host factor, a specific DNA-binding protein that functions in genetic recombination as well as in transcriptional and translational control. This is Integration host factor subunit alpha from Shewanella halifaxensis (strain HAW-EB4).